The following is a 116-amino-acid chain: Large ribosomal subunit protein bL19 (116 aa).

The protein belongs to the bacterial ribosomal protein bL19 family.

Its function is as follows. This protein is located at the 30S-50S ribosomal subunit interface and may play a role in the structure and function of the aminoacyl-tRNA binding site. The polypeptide is Large ribosomal subunit protein bL19 (Solidesulfovibrio magneticus (strain ATCC 700980 / DSM 13731 / RS-1) (Desulfovibrio magneticus)).